A 427-amino-acid polypeptide reads, in one-letter code: Glutamate-1-semialdehyde 2,1-aminomutase (427 aa).

Lysine 265 carries the post-translational modification N6-(pyridoxal phosphate)lysine.

It belongs to the class-III pyridoxal-phosphate-dependent aminotransferase family. HemL subfamily. As to quaternary structure, homodimer. Pyridoxal 5'-phosphate serves as cofactor.

The protein localises to the cytoplasm. It carries out the reaction (S)-4-amino-5-oxopentanoate = 5-aminolevulinate. It functions in the pathway porphyrin-containing compound metabolism; protoporphyrin-IX biosynthesis; 5-aminolevulinate from L-glutamyl-tRNA(Glu): step 2/2. In Marinomonas sp. (strain MWYL1), this protein is Glutamate-1-semialdehyde 2,1-aminomutase.